The following is an 873-amino-acid chain: Ectonucleotide pyrophosphatase/phosphodiesterase family member 3 (873 aa).

Residues 1-11 lie on the Cytoplasmic side of the membrane; the sequence is MESMLTLAMEQ. A helical; Signal-anchor for type II membrane protein transmembrane segment spans residues 12-30; that stretch reads PVKRNTLKKYKIACIVLLA. The Extracellular portion of the chain corresponds to 31 to 873; sequence LLVIVSLGLG…TYLPTFETTI (843 aa). SMB domains lie at 51–93 and 94–138; these read QGSC…VEST and RIWM…GETS. Disulfide bonds link cysteine 54–cysteine 71, cysteine 58–cysteine 89, cysteine 69–cysteine 82, cysteine 75–cysteine 81, cysteine 98–cysteine 115, cysteine 103–cysteine 133, cysteine 113–cysteine 126, cysteine 119–cysteine 125, cysteine 144–cysteine 190, and cysteine 152–cysteine 364. Positions 78 to 80 match the Cell attachment site motif; sequence RGD. The phosphodiesterase stretch occupies residues 160–544; the sequence is PVILFSMDGF…HGSLNHLLKV (385 aa). Position 167 (aspartate 167) interacts with Zn(2+). Lysine 204 lines the ATP pocket. Position 205 (threonine 205) interacts with Zn(2+). Threonine 205 functions as the Nucleophile in the catalytic mechanism. Asparagine 226 is an ATP binding site. A glycan (N-linked (GlcNAc...) asparagine) is linked at asparagine 236. Position 275 (glutamate 275) interacts with ATP. N-linked (GlcNAc...) asparagine glycosylation occurs at asparagine 279. An ATP-binding site is contributed by tyrosine 289. N-linked (GlcNAc...) asparagine glycosylation is present at asparagine 290. Residues aspartate 325, histidine 329, aspartate 372, and histidine 373 each contribute to the Zn(2+) site. 6 disulfide bridges follow: cysteine 380/cysteine 477, cysteine 428/cysteine 816, cysteine 561/cysteine 621, cysteine 573/cysteine 677, cysteine 575/cysteine 662, and cysteine 785/cysteine 795. Residue asparagine 425 is glycosylated (N-linked (GlcNAc...) asparagine). Zn(2+) is bound at residue histidine 482. N-linked (GlcNAc...) asparagine glycans are attached at residues asparagine 532, asparagine 592, asparagine 685, and asparagine 697. The segment at 580–873 is nuclease; the sequence is NSIQLEQVNQ…TYLPTFETTI (294 aa). 5 residues coordinate Ca(2+): aspartate 750, asparagine 752, aspartate 754, histidine 756, and aspartate 758. Residue asparagine 787 is glycosylated (N-linked (GlcNAc...) asparagine).

In terms of assembly, monomer and homodimer. Zn(2+) serves as cofactor. In terms of processing, N-glycosylated. N-glycosylation is necessary for normal transport to the cell membrane, but is not the apical targeting signal.

It localises to the cell membrane. The protein resides in the apical cell membrane. The protein localises to the secreted. The catalysed reaction is a ribonucleoside 5'-triphosphate + H2O = a ribonucleoside 5'-phosphate + diphosphate + H(+). It carries out the reaction ATP + H2O = AMP + diphosphate + H(+). The enzyme catalyses CTP + H2O = CMP + diphosphate + H(+). It catalyses the reaction GTP + H2O = GMP + diphosphate + H(+). The catalysed reaction is UTP + H2O = UMP + diphosphate + H(+). It carries out the reaction UDP-N-acetyl-alpha-D-glucosamine + H2O = N-acetyl-alpha-D-glucosamine 1-phosphate + UMP + 2 H(+). The enzyme catalyses P(1),P(3)-bis(5'-adenosyl) triphosphate + H2O = AMP + ADP + 2 H(+). It catalyses the reaction P(1),P(4)-bis(5'-adenosyl) tetraphosphate + H2O = AMP + ATP + 2 H(+). The catalysed reaction is P(1),P(5)-bis(5'-adenosyl) pentaphosphate + H2O = adenosine 5'-tetraphosphate + AMP + 2 H(+). It carries out the reaction P(1),P(4)-bis(5'-guanosyl) tetraphosphate + H2O = GMP + GTP + 2 H(+). The enzyme catalyses Hydrolytically removes 5'-nucleotides successively from the 3'-hydroxy termini of 3'-hydroxy-terminated oligonucleotides.. Functionally, hydrolase that metabolizes extracellular nucleotides, including ATP, GTP, UTP and CTP. Limits mast cells and basophils response during inflammation and during the chronic phases of allergic responses by eliminating extracellular ATP, a signaling molecule activating these cells in an autocrine manner. Metabolizes extracellular ATP in the lumen of the small intestine, and thereby prevents ATP-induced apoptosis of intestinal plasmacytoid dendritic cells. Has a broad specificity and can also hydrolyze UDP-GlcNAc into UMP and GlcNAc-1-phosphate and potentially several other intracellular nucleotide sugars, including UDP-GalNAc, CMP-NeuAc, GDP-Fuc, and UDP-GlcA. Thereby, could modulate glycan biosynthesis and protein glycosylation. Can hydrolyze extracellular dinucleoside polyphosphates, including the vasoactive adenosine polyphosphates as well. In addition, displays an alkaline phosphodiesterase activity in vitro. This chain is Ectonucleotide pyrophosphatase/phosphodiesterase family member 3, found in Pongo abelii (Sumatran orangutan).